A 76-amino-acid chain; its full sequence is Acyl carrier protein (76 aa).

The Carrier domain occupies 2–76 (SSIFDKVKAI…SAVEYIKENQ (75 aa)). At serine 36 the chain carries O-(pantetheine 4'-phosphoryl)serine.

It belongs to the acyl carrier protein (ACP) family. 4'-phosphopantetheine is transferred from CoA to a specific serine of apo-ACP by AcpS. This modification is essential for activity because fatty acids are bound in thioester linkage to the sulfhydryl of the prosthetic group.

The protein resides in the cytoplasm. The protein operates within lipid metabolism; fatty acid biosynthesis. Functionally, carrier of the growing fatty acid chain in fatty acid biosynthesis. The protein is Acyl carrier protein of Heliobacterium modesticaldum (strain ATCC 51547 / Ice1).